A 117-amino-acid polypeptide reads, in one-letter code: Peptidyl-tRNA hydrolase (117 aa).

It belongs to the PTH2 family.

It is found in the cytoplasm. The catalysed reaction is an N-acyl-L-alpha-aminoacyl-tRNA + H2O = an N-acyl-L-amino acid + a tRNA + H(+). The natural substrate for this enzyme may be peptidyl-tRNAs which drop off the ribosome during protein synthesis. The protein is Peptidyl-tRNA hydrolase of Thermoplasma acidophilum (strain ATCC 25905 / DSM 1728 / JCM 9062 / NBRC 15155 / AMRC-C165).